Reading from the N-terminus, the 185-residue chain is uncharacterized protein (185 aa).

This is an uncharacterized protein from Haemophilus influenzae (strain ATCC 51907 / DSM 11121 / KW20 / Rd).